The sequence spans 482 residues: UDP-glycosyltransferase 86A2 (482 aa).

Residues Ser-297, 355–357 (CCQ), 372–380 (HCGWNSILE), and 394–397 (LTDQ) each bind UDP-alpha-D-glucose.

It belongs to the UDP-glycosyltransferase family.

This Arabidopsis thaliana (Mouse-ear cress) protein is UDP-glycosyltransferase 86A2 (UGT86A2).